We begin with the raw amino-acid sequence, 368 residues long: Agmatine deiminase (368 aa).

Catalysis depends on Cys357, which acts as the Amidino-cysteine intermediate.

Belongs to the agmatine deiminase family. In terms of assembly, homodimer.

The catalysed reaction is agmatine + H2O = N-carbamoylputrescine + NH4(+). Its pathway is amine and polyamine biosynthesis; putrescine biosynthesis via agmatine pathway; N-carbamoylputrescine from agmatine: step 1/1. Its function is as follows. Mediates the hydrolysis of agmatine into N-carbamoylputrescine in the arginine decarboxylase (ADC) pathway of putrescine biosynthesis, a basic polyamine. This is Agmatine deiminase from Pseudomonas aeruginosa (strain UCBPP-PA14).